Consider the following 370-residue polypeptide: Cathepsin B-like cysteine proteinase 3 (370 aa).

The signal sequence occupies residues 1-16; that stretch reads MLKVYFLALFLAGCSA. Residues 17-91 constitute a propeptide that is removed on maturation; it reads FVLDEIRGIN…FVRGEIVPEP (75 aa). 6 cysteine pairs are disulfide-bonded: cysteine 105–cysteine 134, cysteine 117–cysteine 162, cysteine 153–cysteine 210, cysteine 154–cysteine 158, cysteine 190–cysteine 214, and cysteine 198–cysteine 202. Cysteine 120 is an active-site residue. N-linked (GlcNAc...) asparagine glycosylation is present at asparagine 138. Residues histidine 284 and asparagine 304 contribute to the active site.

This sequence belongs to the peptidase C1 family.

The chain is Cathepsin B-like cysteine proteinase 3 (cpr-3) from Caenorhabditis elegans.